The primary structure comprises 347 residues: N-acetyl-gamma-glutamyl-phosphate reductase (347 aa).

C153 is an active-site residue.

This sequence belongs to the NAGSA dehydrogenase family. Type 1 subfamily.

The protein localises to the cytoplasm. The catalysed reaction is N-acetyl-L-glutamate 5-semialdehyde + phosphate + NADP(+) = N-acetyl-L-glutamyl 5-phosphate + NADPH + H(+). It participates in amino-acid biosynthesis; L-arginine biosynthesis; N(2)-acetyl-L-ornithine from L-glutamate: step 3/4. Functionally, catalyzes the NADPH-dependent reduction of N-acetyl-5-glutamyl phosphate to yield N-acetyl-L-glutamate 5-semialdehyde. The polypeptide is N-acetyl-gamma-glutamyl-phosphate reductase (Mycobacterium leprae (strain Br4923)).